The primary structure comprises 103 residues: Large ribosomal subunit protein bL21 (103 aa).

Belongs to the bacterial ribosomal protein bL21 family. Part of the 50S ribosomal subunit. Contacts protein L20.

This protein binds to 23S rRNA in the presence of protein L20. The protein is Large ribosomal subunit protein bL21 of Ectopseudomonas mendocina (strain ymp) (Pseudomonas mendocina).